A 342-amino-acid chain; its full sequence is Tetraacyldisaccharide 4'-kinase (342 aa).

An ATP-binding site is contributed by 68-75; it reads TVGGTGKT.

Belongs to the LpxK family.

The enzyme catalyses a lipid A disaccharide + ATP = a lipid IVA + ADP + H(+). It functions in the pathway glycolipid biosynthesis; lipid IV(A) biosynthesis; lipid IV(A) from (3R)-3-hydroxytetradecanoyl-[acyl-carrier-protein] and UDP-N-acetyl-alpha-D-glucosamine: step 6/6. In terms of biological role, transfers the gamma-phosphate of ATP to the 4'-position of a tetraacyldisaccharide 1-phosphate intermediate (termed DS-1-P) to form tetraacyldisaccharide 1,4'-bis-phosphate (lipid IVA). This chain is Tetraacyldisaccharide 4'-kinase, found in Burkholderia multivorans (strain ATCC 17616 / 249).